A 217-amino-acid polypeptide reads, in one-letter code: Growth hormone variant (217 aa).

Positions 1–26 (MAAGSRTSLLLAFGLLCLPWLQEGSA) are cleaved as a signal peptide. Cystine bridges form between Cys79–Cys191 and Cys208–Cys215. Ser132 is modified (phosphoserine). Asn166 carries an N-linked (GlcNAc...) asparagine glycan. At Ser176 the chain carries Phosphoserine.

It belongs to the somatotropin/prolactin family. In terms of tissue distribution, expressed in the placenta.

Its subcellular location is the secreted. Its function is as follows. Plays an important role in growth control. Its major role in stimulating body growth is to stimulate the liver and other tissues to secrete IGF1. It stimulates both the differentiation and proliferation of myoblasts. It also stimulates amino acid uptake and protein synthesis in muscle and other tissues. This is Growth hormone variant (GH2) from Pan troglodytes (Chimpanzee).